Here is an 830-residue protein sequence, read N- to C-terminus: Serine/threonine-protein kinase atg1 (830 aa).

One can recognise a Protein kinase domain in the interval 14–307 (YVIRSEIGRG…YDGFFSSIVV (294 aa)). ATP is bound by residues 20–28 (IGRGSFAIV) and Lys-43. Asp-157 serves as the catalytic Proton acceptor. Residue Ser-346 is modified to Phosphoserine. Polar residues predominate over residues 448–468 (TQLSNESLTHEQSINGNSPSP). Positions 448–480 (TQLSNESLTHEQSINGNSPSPNEGVFQGSFSPE) are disordered.

It belongs to the protein kinase superfamily. Ser/Thr protein kinase family. APG1/unc-51/ULK1 subfamily. In terms of assembly, homodimer. Component of the atg1 kinase complex composed of at least atg1, atg13, atg17 and atg101. Interacts directly with atg13. Post-translationally, phosphorylated. Dephosphorylated under depletion of nitrogen.

It catalyses the reaction L-seryl-[protein] + ATP = O-phospho-L-seryl-[protein] + ADP + H(+). The enzyme catalyses L-threonyl-[protein] + ATP = O-phospho-L-threonyl-[protein] + ADP + H(+). Functionally, serine/threonine protein kinase involved in the cytoplasm to vacuole transport (Cvt) and found to be essential in autophagy, where it is required for the formation of autophagosomes. Involved in the clearance of protein aggregates which cannot be efficiently cleared by the proteasome. Required for selective autophagic degradation of the nucleus (nucleophagy) as well as for mitophagy which contributes to regulate mitochondrial quantity and quality by eliminating the mitochondria to a basal level to fulfill cellular energy requirements and preventing excess ROS production. Also involved in endoplasmic reticulum-specific autophagic process, in selective removal of ER-associated degradation (ERAD) substrates. Plays a key role in ATG9 and ATG23 cycling through the pre-autophagosomal structure and is necessary to promote ATG18 binding to ATG9 through phosphorylation of ATG9. Catalyzes phosphorylation of ATG4, decreasing the interaction between ATG4 and ATG8 and impairing deconjugation of PE-conjugated forms of ATG8. Autophagy functions to supply nitrogen and is activated when cells cannot access exogenous nitrogen, thus ensuring that they can adapt and subsequently propagate. Finally, atg13 is also required for glycogen storage during stationary phase and has a role in meiosis and sporulation. The chain is Serine/threonine-protein kinase atg1 from Schizosaccharomyces pombe (strain 972 / ATCC 24843) (Fission yeast).